The primary structure comprises 429 residues: UDP-N-acetylglucosamine 1-carboxyvinyltransferase 2 (429 aa).

Position 22 to 23 (22 to 23 (KN)) interacts with phosphoenolpyruvate. Residue Arg93 coordinates UDP-N-acetyl-alpha-D-glucosamine. Cys117 (proton donor) is an active-site residue. Cys117 bears the 2-(S-cysteinyl)pyruvic acid O-phosphothioketal mark. UDP-N-acetyl-alpha-D-glucosamine-binding positions include 122 to 126 (RPIDQ), Asp305, and Ile327.

It belongs to the EPSP synthase family. MurA subfamily.

The protein localises to the cytoplasm. The enzyme catalyses phosphoenolpyruvate + UDP-N-acetyl-alpha-D-glucosamine = UDP-N-acetyl-3-O-(1-carboxyvinyl)-alpha-D-glucosamine + phosphate. Its pathway is cell wall biogenesis; peptidoglycan biosynthesis. Functionally, cell wall formation. Adds enolpyruvyl to UDP-N-acetylglucosamine. The protein is UDP-N-acetylglucosamine 1-carboxyvinyltransferase 2 of Bacillus anthracis.